Here is a 128-residue protein sequence, read N- to C-terminus: Small ribosomal subunit protein eS8 (128 aa).

It belongs to the eukaryotic ribosomal protein eS8 family. In terms of assembly, part of the 30S ribosomal subunit.

This chain is Small ribosomal subunit protein eS8, found in Metallosphaera sedula (strain ATCC 51363 / DSM 5348 / JCM 9185 / NBRC 15509 / TH2).